The primary structure comprises 1870 residues: Non-reducing polyketide synthase pkgA (1870 aa).

Residues 40–279 (IQDLIRRLHR…SRHSALPISG (240 aa)) form an N-terminal acylcarrier protein transacylase domain (SAT) region. The region spanning 416–838 (DAKLAVVGMA…GGNTTLLLED (423 aa)) is the Ketosynthase family 3 (KS3) domain. Positions 453 to 492 (PPDRFDLDAHFDPSGEKENTTTKGSQSNRPLSRQAEQTDP) are disordered. The segment covering 455–472 (DRFDLDAHFDPSGEKENT) has biased composition (basic and acidic residues). Over residues 473 to 492 (TTKGSQSNRPLSRQAEQTDP) the composition is skewed to polar residues. Catalysis depends on for beta-ketoacyl synthase activity residues C577, H712, and H755. Positions 947–1282 (AFSGQGCLYH…QSFASLRRGD (336 aa)) are malonyl-CoA:ACP transacylase (MAT) domain. Residues 1004–1027 (RCPHRESTPSSDASHDSNTNRTST) are disordered. Residues 1011–1027 (TPSSDASHDSNTNRTST) show a composition bias toward polar residues. A product template (PT) domain region spans residues 1364-1704 (TSSVQQIIFE…PRALMPVLFP (341 aa)). Residues 1368–1502 (QQIIFEEYDE…ATVCYEEAQD (135 aa)) are N-terminal hotdog fold. The 333-residue stretch at 1368–1700 (QQIIFEEYDE…FKAVPRALMP (333 aa)) folds into the PKS/mFAS DH domain. The Proton acceptor; for dehydratase activity role is filled by H1400. The tract at residues 1538–1700 (KGGPRVNNFF…FKAVPRALMP (163 aa)) is C-terminal hotdog fold. D1602 functions as the Proton donor; for dehydratase activity in the catalytic mechanism. The region spanning 1795–1870 (QSQNAQATAC…VQDLVTWLSK (76 aa)) is the Carrier domain. At S1832 the chain carries O-(pantetheine 4'-phosphoryl)serine.

The cofactor is pantetheine 4'-phosphate.

It catalyses the reaction holo-[ACP] + 6 malonyl-CoA + acetyl-CoA + 6 H(+) = 3,5,7,9,11,13-hexaoxotetradecanoyl-[ACP] + 6 CO2 + 7 CoA. The enzyme catalyses holo-[ACP] + 5 malonyl-CoA + acetyl-CoA + 5 H(+) = 3,5,7,9,11-pentaoxododecanoyl-[ACP] + 5 CO2 + 6 CoA. It functions in the pathway secondary metabolite biosynthesis. Its function is as follows. Non-reducing polyketide synthase; part of the pkg gene cluster that mediates the biosynthesis of dihydrocitreoisocoumarin and 6,8-dihydroxy-3-(2-oxopropyl)-isocoumarin. The non-reducing polyketide synthase pkgA performs the condensation of one acetyl-CoA starter unit with 6 and 5 malonyl-CoA units, respectively. As pkgA lacks a releasing domain, the thioesterase pkgB is necessary to break the thioester bond and release dihydrocitreoisocoumarin and 6,8-dihydroxy-3-(2-oxopropyl)-isocoumarin from pkgA. In Emericella nidulans (strain FGSC A4 / ATCC 38163 / CBS 112.46 / NRRL 194 / M139) (Aspergillus nidulans), this protein is Non-reducing polyketide synthase pkgA.